We begin with the raw amino-acid sequence, 251 residues long: uncharacterized protein (251 aa).

12 to 36 (VVTGASSGIGEATARTLAAQGFHVV) lines the NADP(+) pocket. Serine 136 is a substrate binding site. Tyrosine 149 serves as the catalytic Proton acceptor.

This sequence belongs to the short-chain dehydrogenases/reductases (SDR) family.

This is an uncharacterized protein from Mycobacterium tuberculosis (strain CDC 1551 / Oshkosh).